The chain runs to 370 residues: tRNA 2-selenouridine synthase (370 aa).

Residues 12–136 form the Rhodanese domain; the sequence is FLDDVPMMDM…MRTFLLETTQ (125 aa). C95 acts as the S-selanylcysteine intermediate in catalysis.

Belongs to the SelU family. Monomer.

It catalyses the reaction 5-methylaminomethyl-2-thiouridine(34) in tRNA + selenophosphate + (2E)-geranyl diphosphate + H2O + H(+) = 5-methylaminomethyl-2-selenouridine(34) in tRNA + (2E)-thiogeraniol + phosphate + diphosphate. It carries out the reaction 5-methylaminomethyl-2-thiouridine(34) in tRNA + (2E)-geranyl diphosphate = 5-methylaminomethyl-S-(2E)-geranyl-thiouridine(34) in tRNA + diphosphate. The enzyme catalyses 5-methylaminomethyl-S-(2E)-geranyl-thiouridine(34) in tRNA + selenophosphate + H(+) = 5-methylaminomethyl-2-(Se-phospho)selenouridine(34) in tRNA + (2E)-thiogeraniol. The catalysed reaction is 5-methylaminomethyl-2-(Se-phospho)selenouridine(34) in tRNA + H2O = 5-methylaminomethyl-2-selenouridine(34) in tRNA + phosphate. Functionally, involved in the post-transcriptional modification of the uridine at the wobble position (U34) of tRNA(Lys), tRNA(Glu) and tRNA(Gln). Catalyzes the conversion of 2-thiouridine (S2U-RNA) to 2-selenouridine (Se2U-RNA). Acts in a two-step process involving geranylation of 2-thiouridine (S2U) to S-geranyl-2-thiouridine (geS2U) and subsequent selenation of the latter derivative to 2-selenouridine (Se2U) in the tRNA chain. This chain is tRNA 2-selenouridine synthase, found in Pseudomonas putida (strain GB-1).